A 259-amino-acid polypeptide reads, in one-letter code: Cytosolic Fe-S cluster assembly factor Nubp2 homolog (259 aa).

Residue 14 to 21 (GKGGVGKS) participates in ATP binding. [4Fe-4S] cluster is bound by residues Cys-188 and Cys-191.

The protein belongs to the Mrp/NBP35 ATP-binding proteins family. NUBP2/CFD1 subfamily. As to quaternary structure, heterotetramer of 2 Nubp1 and 2 Nubp2 chains. [4Fe-4S] cluster serves as cofactor.

The protein resides in the cytoplasm. In terms of biological role, component of the cytosolic iron-sulfur (Fe/S) protein assembly (CIA) machinery. Required for maturation of extramitochondrial Fe-S proteins. The Nubp1-Nubp2 heterotetramer forms a Fe-S scaffold complex, mediating the de novo assembly of an Fe-S cluster and its transfer to target apoproteins. This chain is Cytosolic Fe-S cluster assembly factor Nubp2 homolog, found in Anopheles gambiae (African malaria mosquito).